Reading from the N-terminus, the 56-residue chain is Small ribosomal subunit protein uS14 (56 aa).

Positions 21, 24, 39, and 42 each coordinate Zn(2+).

Belongs to the universal ribosomal protein uS14 family. In terms of assembly, component of the 40S small ribosomal subunit. Zn(2+) is required as a cofactor.

Its subcellular location is the cytoplasm. The protein localises to the cytosol. It localises to the rough endoplasmic reticulum. This chain is Small ribosomal subunit protein uS14 (RpS29), found in Scarabaeus laticollis (Scarab dung beetle).